Reading from the N-terminus, the 318-residue chain is Adenylate isopentenyltransferase 4 (318 aa).

12 to 19 (GATGSGKS) is an ATP binding site.

The protein belongs to the IPP transferase family. Mg(2+) is required as a cofactor. Expressed in immature seeds with highest expression in the chalazal endosperm.

The protein resides in the cytoplasm. The enzyme catalyses dimethylallyl diphosphate + ADP = N(6)-(dimethylallyl)adenosine 5'-diphosphate + diphosphate. The catalysed reaction is dimethylallyl diphosphate + ATP = N(6)-(dimethylallyl)adenosine 5'-triphosphate + diphosphate. Involved in cytokinin biosynthesis. Catalyzes the transfer of an isopentenyl group from dimethylallyl diphosphate (DMAPP) to ATP and ADP, but not to AMP. Has no DMAPP:tRNA isopentenyltransferase activity. This Arabidopsis thaliana (Mouse-ear cress) protein is Adenylate isopentenyltransferase 4 (IPT4).